Reading from the N-terminus, the 325-residue chain is G-protein coupled receptor E6 (325 aa).

A run of 7 helical transmembrane segments spans residues 45 to 65 (LFGTMLEGVFLGIVLTMMGFF), 71 to 91 (FTPSSNIWLFAGCVAIALWLM), 106 to 126 (IVTENLALFCSLLGGALNVGM), 145 to 165 (PAAICTYIFWAVVGSLLVIAV), 198 to 218 (LVAKFLMYLVFVCIVSVGTAL), 233 to 253 (AICVNVVLVTLPNTFIWLTAM), and 274 to 294 (VFIYLSSVPMLVILFVYMFTG).

It belongs to the G-protein coupled receptor 1 family.

The protein localises to the host membrane. The sequence is that of G-protein coupled receptor E6 (E6) from Equus caballus (Horse).